The chain runs to 1131 residues: Phytochrome A (1131 aa).

Residues 1-23 form a disordered region; that stretch reads MSSSRPAHSSSSSSRTRQSSRAR. The region spanning 219–404 is the GAF domain; that stretch reads SMEALCNTVV…VFAVHVNKEF (186 aa). Cysteine 324 contributes to the phytochromobilin binding site. 2 consecutive PAS domains span residues 620–690 and 750–834; these read VTSE…LQGR and VEGD…LAGE. A Histidine kinase domain is found at 904–1124; sequence YMRHAINKPL…TFILTAELAA (221 aa).

Belongs to the phytochrome family. In terms of assembly, homodimer. Contains one covalently linked phytochromobilin chromophore.

Functionally, regulatory photoreceptor which exists in two forms that are reversibly interconvertible by light: the Pr form that absorbs maximally in the red region of the spectrum and the Pfr form that absorbs maximally in the far-red region. Photoconversion of Pr to Pfr induces an array of morphogenic responses, whereas reconversion of Pfr to Pr cancels the induction of those responses. Pfr controls the expression of a number of nuclear genes including those encoding the small subunit of ribulose-bisphosphate carboxylase, chlorophyll A/B binding protein, protochlorophyllide reductase, rRNA, etc. It also controls the expression of its own gene(s) in a negative feedback fashion. The protein is Phytochrome A (PHYA1) of Zea mays (Maize).